Reading from the N-terminus, the 551-residue chain is Calcium-dependent protein kinase 13 (551 aa).

Residue glycine 2 is the site of N-myristoyl glycine attachment. Residues 15-78 (SFKQTASQRH…APADLGSVLG (64 aa)) are disordered. One can recognise a Protein kinase domain in the interval 88–346 (YAMGRKLGQG…AHEVLCHPWI (259 aa)). ATP is bound by residues 94 to 102 (LGQGQFGTT) and lysine 117. Catalysis depends on aspartate 212, which acts as the Proton acceptor. The tract at residues 352-382 (APDRPLDPAVLSRIKQFSAMNKLKKMALRVI) is autoinhibitory domain. EF-hand domains lie at 389 to 424 (EEIAGLKEMFQTMDADNSGAITYDELKEGLRKYGST), 425 to 460 (LKDTEIRDLMDAADIDNSGTIDYIEFIAATLHLNKL), 461 to 496 (EREEHLVAAFSYFDKDGSGYITVDELQQACKEHNMP), and 497 to 530 (DAFLDDVINEADQDNDGRIDYGEFVAMMTKGNMG). 19 residues coordinate Ca(2+): aspartate 402, aspartate 404, serine 406, glutamate 413, aspartate 438, aspartate 440, serine 442, threonine 444, glutamate 449, aspartate 474, aspartate 476, serine 478, tyrosine 480, glutamate 485, aspartate 508, aspartate 510, aspartate 512, arginine 514, and glutamate 519.

Belongs to the protein kinase superfamily. Ser/Thr protein kinase family. CDPK subfamily. Expressed in vascular tissues of crowns and roots, vascular bundles and central cylinder. Expressed in roots, leaf blades, spikelets and developing seeds.

It is found in the membrane. It carries out the reaction L-seryl-[protein] + ATP = O-phospho-L-seryl-[protein] + ADP + H(+). The enzyme catalyses L-threonyl-[protein] + ATP = O-phospho-L-threonyl-[protein] + ADP + H(+). Its activity is regulated as follows. Activated by calcium. Autophosphorylation may play an important role in the regulation of the kinase activity. Its function is as follows. May play a role in signal transduction pathways that involve calcium as a second messenger. May function in signal transduction pathways that positively regulate responses to cold, salt and drought stresses. The chain is Calcium-dependent protein kinase 13 from Oryza sativa subsp. japonica (Rice).